The following is a 257-amino-acid chain: uncharacterized protein (257 aa).

2 disordered regions span residues 86–119 and 182–206; these read SDEE…RPLS and STPL…TDGQ. Residues 196 to 206 show a composition bias toward polar residues; it reads PTPTSQLTDGQ.

This is an uncharacterized protein from Invertebrate iridescent virus 3 (IIV-3).